The chain runs to 560 residues: Glutamate--tRNA ligase (560 aa).

The 'HIGH' region motif lies at P108–H118.

This sequence belongs to the class-I aminoacyl-tRNA synthetase family. Glutamate--tRNA ligase type 2 subfamily.

It is found in the cytoplasm. The enzyme catalyses tRNA(Glu) + L-glutamate + ATP = L-glutamyl-tRNA(Glu) + AMP + diphosphate. Catalyzes the attachment of glutamate to tRNA(Glu) in a two-step reaction: glutamate is first activated by ATP to form Glu-AMP and then transferred to the acceptor end of tRNA(Glu). In Methanocorpusculum labreanum (strain ATCC 43576 / DSM 4855 / Z), this protein is Glutamate--tRNA ligase.